A 571-amino-acid chain; its full sequence is Quinone-dependent D-lactate dehydrogenase (571 aa).

The FAD-binding PCMH-type domain occupies 42-213 (GQGDALAVVF…SKLDDDRIKD (172 aa)). Residues 76-80 (AANTG), 84-85 (GS), Gly143, Ser150, Gly160, and Val262 each bind FAD. Positions 546–571 (RENDPTNSMNPGIGKTSKRKNWQEVE) are disordered.

Belongs to the quinone-dependent D-lactate dehydrogenase family. Requires FAD as cofactor.

The protein localises to the cell inner membrane. It carries out the reaction (R)-lactate + a quinone = a quinol + pyruvate. Its activity is regulated as follows. Inhibited by 2-hydroxy-3-butynoic acid, but not by p-chloromercuribenzoate, n-ethylmaleimide, or 5,5'-dithiobis(2-nitrobenzoic acid). In terms of biological role, catalyzes the oxidation of D-lactate to pyruvate. Electrons derived from D-lactate oxidation are transferred to the ubiquinone/cytochrome electron transfer chain, where they may be used to provide energy for the active transport of a variety of amino acids and sugars across the membrane. In Escherichia coli (strain K12), this protein is Quinone-dependent D-lactate dehydrogenase.